An 825-amino-acid polypeptide reads, in one-letter code: Protein SEY1 homolog 2 (825 aa).

A disordered region spans residues 1–21 (MDEVSPTKHFTSKPLLPTKTP). At 1–728 (MDEVSPTKHF…EKENSEIKYQ (728 aa)) the chain is on the cytoplasmic side. Residues 83 to 305 (GMDYNAVGIL…FLPQYNKEIP (223 aa)) form the GB1/RHD3-type G domain. 93–100 (GAQSSGKS) is a GTP binding site. Residues 373-397 (KVFTKQIDAALERYKEVTERYMETI) are a coiled coil. Residues 729 to 749 (IPLYLIVLVVFFGFDEFIAIL) form a helical membrane-spanning segment. At 750-752 (TNP) the chain is on the lumenal side. Residues 753-773 (LLFILTLIIGGGVYIGYKLNL) traverse the membrane as a helical segment. Residues 774–825 (GGVAKNYIQYLLSMSLSSTMEYLRTIPFFTPLIDKVWPKDDNNTEETQEEIK) lie on the Cytoplasmic side of the membrane.

Belongs to the TRAFAC class dynamin-like GTPase superfamily. GB1/RHD3 GTPase family. RHD3 subfamily.

Its subcellular location is the endoplasmic reticulum membrane. Functionally, probable GTP-binding protein that may be involved in cell development. This chain is Protein SEY1 homolog 2, found in Entamoeba histolytica (strain ATCC 30459 / HM-1:IMSS / ABRM).